A 300-amino-acid polypeptide reads, in one-letter code: Estradiol 17-beta-dehydrogenase 11 (300 aa).

The first 19 residues, methionine 1 to leucine 19, serve as a signal peptide directing secretion. Leucine 40–valine 64 serves as a coordination point for NADP(+). Serine 172 contacts substrate. The active-site Proton acceptor is tyrosine 185.

The protein belongs to the short-chain dehydrogenases/reductases (SDR) family. 17-beta-HSD 3 subfamily.

It localises to the endoplasmic reticulum. The protein localises to the lipid droplet. The enzyme catalyses 17beta-estradiol + NAD(+) = estrone + NADH + H(+). It carries out the reaction 17beta-estradiol + NADP(+) = estrone + NADPH + H(+). Functionally, can convert androstan-3-alpha,17-beta-diol (3-alpha-diol) to androsterone in vitro, suggesting that it may participate in androgen metabolism during steroidogenesis. May act by metabolizing compounds that stimulate steroid synthesis and/or by generating metabolites that inhibit it. Has no activity toward DHEA (dehydroepiandrosterone), or A-dione (4-androste-3,17-dione), and only a slight activity toward testosterone to A-dione. In Pongo abelii (Sumatran orangutan), this protein is Estradiol 17-beta-dehydrogenase 11 (HSD17B11).